Here is a 424-residue protein sequence, read N- to C-terminus: Protein CapL (424 aa).

Belongs to the UDP-glucose/GDP-mannose dehydrogenase family.

It participates in capsule biogenesis; capsule polysaccharide biosynthesis. Its function is as follows. Required for the biosynthesis of type 1 capsular polysaccharide. The polypeptide is Protein CapL (capL) (Staphylococcus aureus).